A 167-amino-acid chain; its full sequence is UTP pyrophosphatase (167 aa).

The catalysed reaction is UTP + H2O = UMP + diphosphate + H(+). Its function is as follows. Specifically catalyzes the hydrolysis of UTP to UMP and diphosphate in vitro, albeit at apparently slow rate. Shows no activity towards ATP, GTP, CTP, dTTP and ITP as substrates. The protein is UTP pyrophosphatase of Escherichia coli (strain K12).